Here is an 86-residue protein sequence, read N- to C-terminus: Acyl carrier protein (86 aa).

One can recognise a Carrier domain in the interval 10–85; that stretch reads DKIEQKVIEM…DVIQYIKERQ (76 aa). Residue Ser-45 is modified to O-(pantetheine 4'-phosphoryl)serine.

Belongs to the acyl carrier protein (ACP) family. 4'-phosphopantetheine is transferred from CoA to a specific serine of apo-ACP by AcpS. This modification is essential for activity because fatty acids are bound in thioester linkage to the sulfhydryl of the prosthetic group.

The protein localises to the cytoplasm. It participates in lipid metabolism; fatty acid biosynthesis. Carrier of the growing fatty acid chain in fatty acid biosynthesis. This is Acyl carrier protein from Rickettsia canadensis (strain McKiel).